A 155-amino-acid chain; its full sequence is Small ribosomal subunit protein uS7cz/uS7cy (155 aa).

In terms of assembly, component of the chloroplast small ribosomal subunit (SSU). Mature 70S chloroplast ribosomes of higher plants consist of a small (30S) and a large (50S) subunit. The 30S small subunit contains 1 molecule of ribosomal RNA (16S rRNA) and 24 different proteins. The 50S large subunit contains 3 rRNA molecules (23S, 5S and 4.5S rRNA) and 33 different proteins.

Its subcellular location is the plastid. It localises to the chloroplast. Component of the chloroplast ribosome (chloro-ribosome), a dedicated translation machinery responsible for the synthesis of chloroplast genome-encoded proteins, including proteins of the transcription and translation machinery and components of the photosynthetic apparatus. This Spinacia oleracea (Spinach) protein is Small ribosomal subunit protein uS7cz/uS7cy (rps7-A).